The sequence spans 141 residues: Nucleoside triphosphatase NudI (141 aa).

The Nudix hydrolase domain occupies 1-141 (MRQRTIVCPL…RKTLSLKGLL (141 aa)). A Nudix box motif is present at residues 38-59 (GGVEPGERIEDALRREIREELG).

This sequence belongs to the Nudix hydrolase family. NudI subfamily. In terms of assembly, monomer. Mg(2+) is required as a cofactor.

The catalysed reaction is a ribonucleoside 5'-triphosphate + H2O = a ribonucleoside 5'-phosphate + diphosphate + H(+). It carries out the reaction a 2'-deoxyribonucleoside 5'-triphosphate + H2O = a 2'-deoxyribonucleoside 5'-phosphate + diphosphate + H(+). It catalyses the reaction dUTP + H2O = dUMP + diphosphate + H(+). The enzyme catalyses dTTP + H2O = dTMP + diphosphate + H(+). The catalysed reaction is dCTP + H2O = dCMP + diphosphate + H(+). Its function is as follows. Catalyzes the hydrolysis of nucleoside triphosphates, with a preference for pyrimidine deoxynucleoside triphosphates (dUTP, dTTP and dCTP). The sequence is that of Nucleoside triphosphatase NudI from Escherichia fergusonii (strain ATCC 35469 / DSM 13698 / CCUG 18766 / IAM 14443 / JCM 21226 / LMG 7866 / NBRC 102419 / NCTC 12128 / CDC 0568-73).